The chain runs to 125 residues: Small ribosomal subunit protein uS13 (125 aa).

A disordered region spans residues 101–125 (QRTKTNARTRKGKRKTVANKKIAAK).

The protein belongs to the universal ribosomal protein uS13 family. In terms of assembly, part of the 30S ribosomal subunit. Forms a loose heterodimer with protein S19. Forms two bridges to the 50S subunit in the 70S ribosome.

Its function is as follows. Located at the top of the head of the 30S subunit, it contacts several helices of the 16S rRNA. In the 70S ribosome it contacts the 23S rRNA (bridge B1a) and protein L5 of the 50S subunit (bridge B1b), connecting the 2 subunits; these bridges are implicated in subunit movement. Contacts the tRNAs in the A and P-sites. The sequence is that of Small ribosomal subunit protein uS13 from Borrelia duttonii (strain Ly).